The following is a 491-amino-acid chain: Alpha-2-antiplasmin (491 aa).

The first 27 residues, Met-1–Ala-27, serve as a signal peptide directing secretion. The propeptide occupies Val-28–Gln-39. Cys-70 and Cys-143 form a disulfide bridge. N-linked (GlcNAc...) asparagine glycans are attached at residues Asn-126, Asn-295, Asn-309, and Asn-316. Residues Ser-439–Lys-491 are disordered. Tyr-484 bears the Sulfotyrosine mark.

This sequence belongs to the serpin family. In terms of assembly, forms protease inhibiting heterodimer with TMPRSS7. Proteolytically cleaved at Pro-35 by both the prolyl endopeptidase FAP form and antiplasmin-cleaving enzyme FAP soluble form to generate mature alpha-2-antiplasmin. In terms of tissue distribution, expressed by the liver and secreted in plasma.

The protein resides in the secreted. Its function is as follows. Serine protease inhibitor. The major targets of this inhibitor are plasmin and trypsin, but it also inactivates matriptase-3/TMPRSS7 and chymotrypsin. The sequence is that of Alpha-2-antiplasmin (Serpinf2) from Mus musculus (Mouse).